The sequence spans 174 residues: Glutaredoxin-C5, chloroplastic (174 aa).

A chloroplast-targeting transit peptide spans 1 to 51 (MAVTAFNTLKLVSSSLDPIPSVSCSSYSFSLIYVGSPYKRCLKQSCSVRAM). Position 52 is an N-acetylthreonine (T52). C90 is modified (S-glutathionyl cysteine; partial). A disulfide bridge links C90 with C93. Residues 93–171 (CTEVKTLFKR…LMLAEANGKN (79 aa)) form the Glutaredoxin domain. Glutathione-binding residues include V135, C148, and T149. C148 is modified (S-glutathionyl cysteine; partial).

It belongs to the glutaredoxin family. CPYC subfamily. As to quaternary structure, monomeric apoprotein and homodimeric holoprotein containing a [2Fe-2S] cluster. No in vitro interactions with SUFE1, BOLA1, BOLA2 or BOLA4. In terms of processing, glutathionylated.

The protein localises to the plastid. The protein resides in the chloroplast. In terms of biological role, has a glutathione-disulfide oxidoreductase activity in the presence of NADPH and glutathione reductase. Reduces low molecular weight disulfides and proteins. Can assemble a [2Fe-2S] cluster, but cannot transfer it to an apoferredoxin. The chain is Glutaredoxin-C5, chloroplastic from Arabidopsis thaliana (Mouse-ear cress).